The following is a 426-amino-acid chain: Serine--tRNA ligase (426 aa).

L-serine is bound at residue 232 to 234 (TAE). 263–265 (RSE) contributes to the ATP binding site. Glutamate 286 is a binding site for L-serine. 350–353 (EISS) contacts ATP. Serine 385 is an L-serine binding site.

Belongs to the class-II aminoacyl-tRNA synthetase family. Type-1 seryl-tRNA synthetase subfamily. As to quaternary structure, homodimer. The tRNA molecule binds across the dimer.

It localises to the cytoplasm. The enzyme catalyses tRNA(Ser) + L-serine + ATP = L-seryl-tRNA(Ser) + AMP + diphosphate + H(+). The catalysed reaction is tRNA(Sec) + L-serine + ATP = L-seryl-tRNA(Sec) + AMP + diphosphate + H(+). The protein operates within aminoacyl-tRNA biosynthesis; selenocysteinyl-tRNA(Sec) biosynthesis; L-seryl-tRNA(Sec) from L-serine and tRNA(Sec): step 1/1. In terms of biological role, catalyzes the attachment of serine to tRNA(Ser). Is also able to aminoacylate tRNA(Sec) with serine, to form the misacylated tRNA L-seryl-tRNA(Sec), which will be further converted into selenocysteinyl-tRNA(Sec). This is Serine--tRNA ligase from Pediococcus pentosaceus (strain ATCC 25745 / CCUG 21536 / LMG 10740 / 183-1w).